A 349-amino-acid polypeptide reads, in one-letter code: Protein RecA (349 aa).

Position 65-72 (65-72 (GPESSGKT)) interacts with ATP.

Belongs to the RecA family.

It localises to the cytoplasm. Functionally, can catalyze the hydrolysis of ATP in the presence of single-stranded DNA, the ATP-dependent uptake of single-stranded DNA by duplex DNA, and the ATP-dependent hybridization of homologous single-stranded DNAs. It interacts with LexA causing its activation and leading to its autocatalytic cleavage. The polypeptide is Protein RecA (Clostridium acetobutylicum (strain ATCC 824 / DSM 792 / JCM 1419 / IAM 19013 / LMG 5710 / NBRC 13948 / NRRL B-527 / VKM B-1787 / 2291 / W)).